Consider the following 311-residue polypeptide: Apolipoprotein E (311 aa).

An N-terminal signal peptide occupies residues 1–18; sequence MKVWWAVLAAAILAGCRA. Repeat copies occupy residues 74 to 95, 96 to 116, 117 to 138, 139 to 160, 161 to 182, 183 to 204, 205 to 226, and 227 to 248. Residues 74-248 form an 8 X 22 AA approximate tandem repeats region; that stretch reads MLMEETMKEV…RLNEVREQVE (175 aa). Met136 bears the Methionine sulfoxide mark. Ser140 is subject to Phosphoserine. An LDL and other lipoprotein receptors binding region spans residues 151-161; the sequence is HLRKLRKRLLR. 155 to 158 lines the heparin pocket; sequence LRKR. The tract at residues 203-283 is lipid-binding and lipoprotein association; sequence VATVGTLAGR…SWFEPLVEDM (81 aa). Thr205 carries O-linked (GalNAc...) threonine glycosylation. 222-229 contacts heparin; sequence GERLRGHL. The segment at 259–311 is homooligomerization; that stretch reads PQMRLQAEAFQARLKSWFEPLVEDMQRQWAGLVEKLQAAMPSKAPAAAPIENQ. Residues 271 to 283 form a specificity for association with VLDL region; it reads RLKSWFEPLVEDM.

Belongs to the apolipoprotein A1/A4/E family. In terms of assembly, homotetramer. May interact with ABCA1; functionally associated with ABCA1 in the biogenesis of HDLs. May interact with APP/A4 amyloid-beta peptide; the interaction is extremely stable in vitro but its physiological significance is unclear. May interact with MAPT. May interact with MAP2. In the cerebrospinal fluid, interacts with secreted SORL1. Interacts with PMEL; this allows the loading of PMEL luminal fragment on ILVs to induce fibril nucleation. In terms of processing, APOE exists as multiple glycosylated and sialylated glycoforms within cells and in plasma. The extent of glycosylation and sialylation are tissue and context specific. Post-translationally, glycated in plasma VLDL. Phosphorylated by FAM20C in the extracellular medium.

It localises to the secreted. Its subcellular location is the extracellular space. It is found in the extracellular matrix. The protein localises to the extracellular vesicle. The protein resides in the endosome. It localises to the multivesicular body. APOE is an apolipoprotein, a protein associating with lipid particles, that mainly functions in lipoprotein-mediated lipid transport between organs via the plasma and interstitial fluids. APOE is a core component of plasma lipoproteins and is involved in their production, conversion and clearance. Apolipoproteins are amphipathic molecules that interact both with lipids of the lipoprotein particle core and the aqueous environment of the plasma. As such, APOE associates with chylomicrons, chylomicron remnants, very low density lipoproteins (VLDL) and intermediate density lipoproteins (IDL) but shows a preferential binding to high-density lipoproteins (HDL). It also binds a wide range of cellular receptors including the LDL receptor/LDLR and the very low-density lipoprotein receptor/VLDLR that mediate the cellular uptake of the APOE-containing lipoprotein particles. Finally, APOE also has a heparin-binding activity and binds heparan-sulfate proteoglycans on the surface of cells, a property that supports the capture and the receptor-mediated uptake of APOE-containing lipoproteins by cells. The sequence is that of Apolipoprotein E (APOE) from Oryctolagus cuniculus (Rabbit).